The chain runs to 63 residues: MKASELRSKDAAELGKELESLLKAQFGLRMQKATQQLANTSQLRNVRRDIARVRTLLTQKAGK.

Belongs to the universal ribosomal protein uL29 family.

This Bordetella avium (strain 197N) protein is Large ribosomal subunit protein uL29.